A 199-amino-acid polypeptide reads, in one-letter code: Thioredoxin peroxidase (199 aa).

In terms of domain architecture, Thioredoxin spans 6–165 (AKLNHPAPHF…TLRLVKAFQF (160 aa)). Cys52 serves as the catalytic Cysteine sulfenic acid (-SOH) intermediate. Residues 179-199 (PGSKTMKADPNGSQDYFSSMN) are disordered. The segment covering 189-199 (NGSQDYFSSMN) has biased composition (polar residues).

It belongs to the peroxiredoxin family. AhpC/Prx1 subfamily. In terms of assembly, homodimer; disulfide-linked, upon oxidation.

The catalysed reaction is a hydroperoxide + [thioredoxin]-dithiol = an alcohol + [thioredoxin]-disulfide + H2O. Thiol-specific peroxidase that catalyzes the reduction of hydrogen peroxide and organic hydroperoxides to water and alcohols, respectively. Plays a role in cell protection against oxidative stress by detoxifying peroxides and as sensor of hydrogen peroxide-mediated signaling events. This is Thioredoxin peroxidase from Trypanosoma brucei rhodesiense.